A 64-amino-acid chain; its full sequence is Large ribosomal subunit protein bL35 (64 aa).

Belongs to the bacterial ribosomal protein bL35 family.

In Pseudomonas entomophila (strain L48), this protein is Large ribosomal subunit protein bL35.